Reading from the N-terminus, the 188-residue chain is Elongation factor P (188 aa).

This sequence belongs to the elongation factor P family.

It is found in the cytoplasm. Its pathway is protein biosynthesis; polypeptide chain elongation. Functionally, involved in peptide bond synthesis. Stimulates efficient translation and peptide-bond synthesis on native or reconstituted 70S ribosomes in vitro. Probably functions indirectly by altering the affinity of the ribosome for aminoacyl-tRNA, thus increasing their reactivity as acceptors for peptidyl transferase. This is Elongation factor P from Nitrobacter hamburgensis (strain DSM 10229 / NCIMB 13809 / X14).